The sequence spans 410 residues: Beta-arrestin-2 (410 aa).

Tyr48 carries the phosphotyrosine modification. Residues Pro176 and Pro181 each carry the hydroxyproline; by PHD2 modification. The tract at residues 241–410 (ADICLFSTAQ…KDDDCDDQFC (170 aa)) is interaction with TRAF6. Ser361 bears the Phosphoserine mark. An interaction with AP2B1 region spans residues 364 to 410 (RETDVPVDTNLIEFDTNYATDDDIVFEDFARLRLKGMKDDDCDDQFC). Thr383 is subject to Phosphothreonine. Residues 386 to 396 (DIVFEDFARLR) carry the [DE]-X(1,2)-F-X-X-[FL]-X-X-X-R motif motif.

This sequence belongs to the arrestin family. In terms of assembly, homooligomer; the self-association is mediated by InsP6-binding. Heterooligomer with ARRB1; the association is mediated by InsP6-binding. Interacts with ADRB2 and CHRM2. Interacts with PDE4A. Interacts with PDE4D. Interacts with MAPK10, MAPK1 and MAPK3. Interacts with DRD2. Interacts with FSHR. Interacts with CLTC. Interacts with HTR2C. Interacts with CCR5. Interacts with CXCR4. Interacts with SRC. Interacts with DUSP16; the interaction is interrupted by stimulation of AGTR1 and activation of MAPK10. Interacts with CHUK; the interaction is enhanced stimulation of ADRB2. Interacts with RELA. Interacts with MDM2; the interaction is enhanced by activation of GPCRs. Interacts with SLC9A5. Interacts with TRAF6. Interacts with IGF1R. Interacts with ENG. Interacts with ARRB2. Interacts with KIR2DL1, KIR2DL3 and KIR2DL4. Interacts with LDLR. Interacts with AP2B1. Interacts with C5AR1. Interacts with RAF1. Interacts with MAP2K1. Interacts with MAPK1. Interacts with MAPK10; the interaction enhances MAPK10 activation by MAP3K5. Interacts with MAP2K4; the interaction is enhanced by presence of MAP3K5 and MAPK10. Interacts with MAP3K5. Interacts with AKT1. Interacts with IKBKB and MAP3K14. Interacts with SMO (activated). Interacts with GSK3A and GSK3B. Interacts with CXCR4; the interaction is dependent on C-terminal phosphorylation of CXCR4 and allows activation of MAPK1 and MAPK3. Interacts with GPR143. Interacts with HCK and CXCR1 (phosphorylated). Associates with protein phosphatase 2A (PP2A). Interacts with ACKR3 and ACKR4. Interacts with ARRDC1; the interaction is direct. Interacts with GPR61, GPR62 and GPR135. Interacts (via NACHT and LRR domains) with NLRP3; this interaction is direct and inducible by omega-3 polyunsaturated fatty acids (PUFAs). Interacts with FFAR4 (via C-terminus); this interaction is stimulated by long-chain fatty acids (LCFAs). Interacts with GPR35. Interacts with GPR84. Interacts with TIGIT; this interaction inhibits the NF-kappa-B pathway. Interacts with TGFBR3. Phosphorylated at Thr-383 in the cytoplasm; probably dephosphorylated at the plasma membrane. The phosphorylation does not regulate internalization and recycling of ADRB2, interaction with clathrin or AP2B1. In terms of processing, the ubiquitination status appears to regulate the formation and trafficking of beta-arrestin-GPCR complexes and signaling. Ubiquitination appears to occur GPCR-specific. Ubiquitinated by MDM2; the ubiquitination is required for rapid internalization of ADRB2. Deubiquitinated by USP33; the deubiquitination leads to a dissociation of the beta-arrestin-GPCR complex. Stimulation of a class A GPCR, such as ADRB2, induces transient ubiquitination and subsequently promotes association with USP33. Stimulation of a class B GPCR promotes a sustained ubiquitination. Deubiquitinated by USP20; allowing USP20 to deubiquitinate TRAF6 leading to inhibition of NF-kappa-B signaling. Post-translationally, hydroxylation by PHD2 modulates the rate of internalization by slowing down recruitment to the plasma membrane and inhibiting subsequent co-internalization with class A receptors. Predominantly localized in neuronal tissues and in the spleen.

The protein localises to the cytoplasm. The protein resides in the nucleus. It localises to the cell membrane. Its subcellular location is the membrane. It is found in the clathrin-coated pit. The protein localises to the cytoplasmic vesicle. In terms of biological role, functions in regulating agonist-mediated G-protein coupled receptor (GPCR) signaling by mediating both receptor desensitization and resensitization processes. During homologous desensitization, beta-arrestins bind to the GPRK-phosphorylated receptor and sterically preclude its coupling to the cognate G-protein; the binding appears to require additional receptor determinants exposed only in the active receptor conformation. The beta-arrestins target many receptors for internalization by acting as endocytic adapters (CLASPs, clathrin-associated sorting proteins) and recruiting the GPRCs to the adapter protein 2 complex 2 (AP-2) in clathrin-coated pits (CCPs). However, the extent of beta-arrestin involvement appears to vary significantly depending on the receptor, agonist and cell type. Internalized arrestin-receptor complexes traffic to intracellular endosomes, where they remain uncoupled from G-proteins. Two different modes of arrestin-mediated internalization occur. Class A receptors, like ADRB2, OPRM1, ENDRA, D1AR and ADRA1B dissociate from beta-arrestin at or near the plasma membrane and undergo rapid recycling. Class B receptors, like AVPR2, AGTR1, NTSR1, TRHR and TACR1 internalize as a complex with arrestin and traffic with it to endosomal vesicles, presumably as desensitized receptors, for extended periods of time. Receptor resensitization then requires that receptor-bound arrestin is removed so that the receptor can be dephosphorylated and returned to the plasma membrane. Mediates endocytosis of CCR7 following ligation of CCL19 but not CCL21. Involved in internalization of P2RY1, P2RY4, P2RY6 and P2RY11 and ATP-stimulated internalization of P2RY2. Involved in phosphorylation-dependent internalization of OPRD1 and subsequent recycling or degradation. Involved in ubiquitination of IGF1R. Beta-arrestins function as multivalent adapter proteins that can switch the GPCR from a G-protein signaling mode that transmits short-lived signals from the plasma membrane via small molecule second messengers and ion channels to a beta-arrestin signaling mode that transmits a distinct set of signals that are initiated as the receptor internalizes and transits the intracellular compartment. Acts as a signaling scaffold for MAPK pathways such as MAPK1/3 (ERK1/2) and MAPK10 (JNK3). ERK1/2 and JNK3 activated by the beta-arrestin scaffold are largely excluded from the nucleus and confined to cytoplasmic locations such as endocytic vesicles, also called beta-arrestin signalosomes. Acts as a signaling scaffold for the AKT1 pathway. GPCRs for which the beta-arrestin-mediated signaling relies on both ARRB1 and ARRB2 (codependent regulation) include ADRB2, F2RL1 and PTH1R. For some GPCRs the beta-arrestin-mediated signaling relies on either ARRB1 or ARRB2 and is inhibited by the other respective beta-arrestin form (reciprocal regulation). Increases ERK1/2 signaling in AGTR1- and AVPR2-mediated activation (reciprocal regulation). Involved in CCR7-mediated ERK1/2 signaling involving ligand CCL19. Is involved in type-1A angiotensin II receptor/AGTR1-mediated ERK activity. Is involved in type-1A angiotensin II receptor/AGTR1-mediated MAPK10 activity. Is involved in dopamine-stimulated AKT1 activity in the striatum by disrupting the association of AKT1 with its negative regulator PP2A. Involved in AGTR1-mediated chemotaxis. Appears to function as signaling scaffold involved in regulation of MIP-1-beta-stimulated CCR5-dependent chemotaxis. Involved in attenuation of NF-kappa-B-dependent transcription in response to GPCR or cytokine stimulation by interacting with and stabilizing CHUK. Suppresses UV-induced NF-kappa-B-dependent activation by interacting with CHUK. The function is promoted by stimulation of ADRB2 and dephosphorylation of ARRB2. Involved in IL8-mediated granule release in neutrophils. Involved in p53/TP53-mediated apoptosis by regulating MDM2 and reducing the MDM2-mediated degradation of p53/TP53. May serve as nuclear messenger for GPCRs. Upon stimulation of OR1D2, may be involved in regulation of gene expression during the early processes of fertilization. Also involved in regulation of receptors other than GPCRs. Involved in endocytosis of TGFBR2 and TGFBR3 and down-regulates TGF-beta signaling such as NF-kappa-B activation. Involved in endocytosis of low-density lipoprotein receptor/LDLR. Involved in endocytosis of smoothened homolog/Smo, which also requires GRK2. Involved in endocytosis of SLC9A5. Involved in endocytosis of ENG and subsequent TGF-beta-mediated ERK activation and migration of epithelial cells. Involved in Toll-like receptor and IL-1 receptor signaling through the interaction with TRAF6 which prevents TRAF6 autoubiquitination and oligomerization required for activation of NF-kappa-B and JUN. Involved in insulin resistance by acting as insulin-induced signaling scaffold for SRC, AKT1 and INSR. Involved in regulation of inhibitory signaling of natural killer cells by recruiting PTPN6 and PTPN11 to KIR2DL1. Involved in the internalization of the atypical chemokine receptor ACKR3. Acts as an adapter protein coupling FFAR4 receptor to specific downstream signaling pathways, as well as mediating receptor endocytosis. During the activation step of NLRP3 inflammasome, directly associates with NLRP3 leading to inhibition of pro-inflammatory cytokine release and inhibition of inflammation. The chain is Beta-arrestin-2 (Arrb2) from Mus musculus (Mouse).